The chain runs to 284 residues: ATP synthase gamma chain (284 aa).

Belongs to the ATPase gamma chain family. In terms of assembly, F-type ATPases have 2 components, CF(1) - the catalytic core - and CF(0) - the membrane proton channel. CF(1) has five subunits: alpha(3), beta(3), gamma(1), delta(1), epsilon(1). CF(0) has three main subunits: a, b and c.

The protein resides in the cell membrane. In terms of biological role, produces ATP from ADP in the presence of a proton gradient across the membrane. The gamma chain is believed to be important in regulating ATPase activity and the flow of protons through the CF(0) complex. The sequence is that of ATP synthase gamma chain from Bacillus licheniformis (strain ATCC 14580 / DSM 13 / JCM 2505 / CCUG 7422 / NBRC 12200 / NCIMB 9375 / NCTC 10341 / NRRL NRS-1264 / Gibson 46).